The chain runs to 128 residues: Large ribosomal subunit protein bL19 (128 aa).

The protein belongs to the bacterial ribosomal protein bL19 family.

This protein is located at the 30S-50S ribosomal subunit interface and may play a role in the structure and function of the aminoacyl-tRNA binding site. In Azoarcus sp. (strain BH72), this protein is Large ribosomal subunit protein bL19.